The sequence spans 388 residues: Chorismate synthase (388 aa).

NADP(+)-binding residues include arginine 39 and arginine 45. Residues 130–132, 251–252, glycine 296, 311–315, and arginine 337 each bind FMN; these read RSS, NA, and KPIPT.

It belongs to the chorismate synthase family. Homotetramer. It depends on FMNH2 as a cofactor.

It catalyses the reaction 5-O-(1-carboxyvinyl)-3-phosphoshikimate = chorismate + phosphate. It functions in the pathway metabolic intermediate biosynthesis; chorismate biosynthesis; chorismate from D-erythrose 4-phosphate and phosphoenolpyruvate: step 7/7. Its function is as follows. Catalyzes the anti-1,4-elimination of the C-3 phosphate and the C-6 proR hydrogen from 5-enolpyruvylshikimate-3-phosphate (EPSP) to yield chorismate, which is the branch point compound that serves as the starting substrate for the three terminal pathways of aromatic amino acid biosynthesis. This reaction introduces a second double bond into the aromatic ring system. The protein is Chorismate synthase of Lactococcus lactis subsp. cremoris (strain MG1363).